A 315-amino-acid polypeptide reads, in one-letter code: Methionyl-tRNA formyltransferase (315 aa).

(6S)-5,6,7,8-tetrahydrofolate is bound at residue 115–118; sequence SLLP.

It belongs to the Fmt family.

The enzyme catalyses L-methionyl-tRNA(fMet) + (6R)-10-formyltetrahydrofolate = N-formyl-L-methionyl-tRNA(fMet) + (6S)-5,6,7,8-tetrahydrofolate + H(+). Attaches a formyl group to the free amino group of methionyl-tRNA(fMet). The formyl group appears to play a dual role in the initiator identity of N-formylmethionyl-tRNA by promoting its recognition by IF2 and preventing the misappropriation of this tRNA by the elongation apparatus. The chain is Methionyl-tRNA formyltransferase from Dehalococcoides mccartyi (strain ATCC BAA-2100 / JCM 16839 / KCTC 5957 / BAV1).